The chain runs to 281 residues: MEMO1 family protein PAE0818 (281 aa).

Belongs to the MEMO1 family.

This is MEMO1 family protein PAE0818 from Pyrobaculum aerophilum (strain ATCC 51768 / DSM 7523 / JCM 9630 / CIP 104966 / NBRC 100827 / IM2).